Here is a 475-residue protein sequence, read N- to C-terminus: 1,3-beta-glucanosyltransferase gel2 (475 aa).

The N-terminal stretch at 1–21 is a signal peptide; sequence MLPTYVRLFTAVCALATTASA. The cysteines at positions 69 and 98 are disulfide-linked. Tyrosine 87, asparagine 159, glutamate 160, and aspartate 201 together coordinate (1,3-beta-D-glucosyl)n. Catalysis depends on glutamate 160, which acts as the Proton donor. 2 disulfide bridges follow: cysteine 215–cysteine 350 and cysteine 234–cysteine 265. Asparagine 236 is a glycosylation site (N-linked (GlcNAc...) asparagine). Catalysis depends on glutamate 262, which acts as the Nucleophile. Position 294 (tyrosine 294) interacts with (1,3-beta-D-glucosyl)n. N-linked (GlcNAc...) asparagine glycosylation is found at asparagine 311, asparagine 339, and asparagine 357. The segment at 420–451 is disordered; that stretch reads GESNTPGAHSSGSTSGSSSSGGSSSSSSDKES. Positions 429-446 are enriched in low complexity; the sequence is SSGSTSGSSSSGGSSSSS. Serine 451 carries the GPI-like-anchor amidated serine lipid modification. The propeptide at 452–475 is removed in mature form; sequence AAGTISVPFVGLLSAASFMAFFML.

It belongs to the glycosyl hydrolase 72 family. The GPI-like anchor contains a phosphoceramide lipid group.

Its subcellular location is the cell membrane. Splits internally a 1,3-beta-glucan molecule and transfers the newly generated reducing end (the donor) to the non-reducing end of another 1,3-beta-glucan molecule (the acceptor) forming a 1,3-beta linkage, resulting in the elongation of 1,3-beta-glucan chains in the cell wall. Involved in cell wall morphogenesis. The sequence is that of 1,3-beta-glucanosyltransferase gel2 (gel2) from Aspergillus fumigatus (strain CBS 144.89 / FGSC A1163 / CEA10) (Neosartorya fumigata).